Here is a 226-residue protein sequence, read N- to C-terminus: UPF0173 metal-dependent hydrolase TM_1162 (226 aa).

The protein belongs to the UPF0173 family.

The protein is UPF0173 metal-dependent hydrolase TM_1162 of Thermotoga maritima (strain ATCC 43589 / DSM 3109 / JCM 10099 / NBRC 100826 / MSB8).